The following is a 460-amino-acid chain: Elongation factor 1-alpha-A (460 aa).

Gly2 carries the post-translational modification N,N,N-trimethylglycine. Lys3 carries the N6,N6-dimethyllysine; alternate modification. Residue Lys3 is modified to N6-methyllysine; alternate. The 236-residue stretch at 5–240 (KGHINVVVIG…DSIEPPARPT (236 aa)) folds into the tr-type G domain. Residues 14 to 21 (GHVDSGKS) form a G1 region. 14-21 (GHVDSGKS) provides a ligand contact to GTP. Lys30 bears the N6-methyllysine mark. A G2 region spans residues 70-74 (GITID). An N6,N6,N6-trimethyllysine modification is found at Lys79. A G3 region spans residues 91 to 94 (DAPG). Residues 91 to 95 (DAPGH) and 153 to 156 (NKMD) contribute to the GTP site. The interval 153 to 156 (NKMD) is G4. The tract at residues 192–194 (SGF) is G5. Position 316 is an N6,N6-dimethyllysine; alternate (Lys316). Position 316 is an N6-methyllysine; alternate (Lys316). Lys390 carries the N6-methyllysine modification.

This sequence belongs to the TRAFAC class translation factor GTPase superfamily. Classic translation factor GTPase family. EF-Tu/EF-1A subfamily.

The protein localises to the cytoplasm. Its function is as follows. This protein promotes the GTP-dependent binding of aminoacyl-tRNA to the A-site of ribosomes during protein biosynthesis. This is Elongation factor 1-alpha-A (tef101) from Schizosaccharomyces pombe (strain 972 / ATCC 24843) (Fission yeast).